Reading from the N-terminus, the 446-residue chain is 3',5'-cyclic-AMP phosphodiesterase 7B (446 aa).

The 324-residue stretch at 97 to 420 (LDEDYLGQAR…AQWKSLLSNQ (324 aa)) folds into the PDEase domain. His173 serves as the catalytic Proton donor. Residues His177, His213, Asp214, and Asp323 each coordinate a divalent metal cation. Residues 422-446 (RRRGSGQDLAGPAPETLEQTEGATP) form a disordered region. At Ser426 the chain carries Phosphoserine. Thr445 carries the post-translational modification Phosphothreonine.

Belongs to the cyclic nucleotide phosphodiesterase family. PDE7 subfamily. The cofactor is a divalent metal cation. In terms of tissue distribution, highly expressed in brain.

It catalyses the reaction 3',5'-cyclic AMP + H2O = AMP + H(+). The protein operates within purine metabolism; 3',5'-cyclic AMP degradation; AMP from 3',5'-cyclic AMP: step 1/1. With respect to regulation, inhibited by dipyridamole, IBMX and SCH 51866. Insensitive to zaprinast, rolipram, and milrinone. In terms of biological role, hydrolyzes the second messenger cAMP, which is a key regulator of many important physiological processes. May be involved in the control of cAMP-mediated neural activity and cAMP metabolism in the brain. The sequence is that of 3',5'-cyclic-AMP phosphodiesterase 7B from Mus musculus (Mouse).